We begin with the raw amino-acid sequence, 95 residues long: Acylphosphatase (95 aa).

Residues 5-93 (RAHLYIKGKV…GEFQDFRILP (89 aa)) form the Acylphosphatase-like domain. Residues Arg-20 and Asn-38 contribute to the active site.

This sequence belongs to the acylphosphatase family.

The enzyme catalyses an acyl phosphate + H2O = a carboxylate + phosphate + H(+). In Pyrobaculum islandicum (strain DSM 4184 / JCM 9189 / GEO3), this protein is Acylphosphatase (acyP).